Consider the following 711-residue polypeptide: Protein mono-ADP-ribosyltransferase PARP12 (711 aa).

3 C3H1-type zinc fingers span residues 103–128 (LCKF…HNLK), 164–188 (ICLH…IKLH), and 189–211 (ICQY…HEFT). Positions 247-279 (SALSKVSPSPAGPQGSSERKDSSGPVSPGTPSQ) are disordered. A Phosphoserine modification is found at Ser268. C3H1-type zinc fingers lie at residues 280–307 (EESE…HFHL) and 281–306 (ESEQ…VHFH). WWE domains are found at residues 308–371 (PYRW…RLST) and 374–468 (SVTK…KVCR). An ADP-ribosylcysteine modification is found at Cys484. Residues 494-708 (IPDYWDPAAL…IFVALGNLFT (215 aa)) form the PARP catalytic domain. Asp610 and Asp621 each carry ADP-ribosyl aspartic acid.

This sequence belongs to the ARTD/PARP family. In terms of assembly, interacts with PARP11; this interaction plays a key role in zika virus suppression. Interacts with ISG15. Auto-mono-ADP-ribosylated. Post-translationally, phosphorylated by PRKD1.

It localises to the nucleus. Its subcellular location is the golgi apparatus. The protein resides in the trans-Golgi network. It is found in the cytoplasm. The protein localises to the stress granule. The enzyme catalyses L-aspartyl-[protein] + NAD(+) = 4-O-(ADP-D-ribosyl)-L-aspartyl-[protein] + nicotinamide. It catalyses the reaction L-cysteinyl-[protein] + NAD(+) = S-(ADP-D-ribosyl)-L-cysteinyl-[protein] + nicotinamide + H(+). Mono-ADP-ribosyltransferase that mediates mono-ADP-ribosylation of target proteins. Displays anti-alphavirus activity during IFN-gamma immune activation by directly ADP-ribosylating the alphaviral non-structural proteins nsP3 and nsP4. Acts as a component of the PRKD1-driven regulatory cascade that selectively controls a major branch of the basolateral transport pathway by catalyzing the MARylation of GOLGA1. Acts also as a key regulator of mitochondrial function, protein translation, and inflammation. Inhibits PINK1/Parkin-dependent mitophagy and promotes cartilage degeneration by inhibiting the ubiquitination and SUMOylation of MFN1/2 by upregulating ISG15 and ISGylation. The sequence is that of Protein mono-ADP-ribosyltransferase PARP12 from Mus musculus (Mouse).